We begin with the raw amino-acid sequence, 231 residues long: uncharacterized protein (231 aa).

NADP(+) is bound at residue 10-34 (VVTGAGSGIGEAIATLLHEEGAKVV). Position 140 (serine 140) interacts with substrate. Residue tyrosine 153 is the Proton acceptor of the active site.

Belongs to the short-chain dehydrogenases/reductases (SDR) family.

This is an uncharacterized protein from Staphylococcus aureus (strain MRSA252).